Here is a 132-residue protein sequence, read N- to C-terminus: Small ribosomal subunit protein uS11 (132 aa).

The protein belongs to the universal ribosomal protein uS11 family. Part of the 30S ribosomal subunit. Interacts with proteins S7 and S18. Binds to IF-3.

In terms of biological role, located on the platform of the 30S subunit, it bridges several disparate RNA helices of the 16S rRNA. Forms part of the Shine-Dalgarno cleft in the 70S ribosome. This chain is Small ribosomal subunit protein uS11, found in Lachnoclostridium phytofermentans (strain ATCC 700394 / DSM 18823 / ISDg) (Clostridium phytofermentans).